Consider the following 93-residue polypeptide: Co-chaperonin GroES (93 aa).

The protein belongs to the GroES chaperonin family. As to quaternary structure, heptamer of 7 subunits arranged in a ring. Interacts with the chaperonin GroEL.

It localises to the cytoplasm. In terms of biological role, together with the chaperonin GroEL, plays an essential role in assisting protein folding. The GroEL-GroES system forms a nano-cage that allows encapsulation of the non-native substrate proteins and provides a physical environment optimized to promote and accelerate protein folding. GroES binds to the apical surface of the GroEL ring, thereby capping the opening of the GroEL channel. This is Co-chaperonin GroES from Streptococcus gordonii (strain Challis / ATCC 35105 / BCRC 15272 / CH1 / DL1 / V288).